We begin with the raw amino-acid sequence, 176 residues long: Epididymal-specific lipocalin-9 (176 aa).

The first 15 residues, 1-15 (MALLLLSLGLSLIAA), serve as a signal peptide directing secretion. N-linked (GlcNAc...) asparagine glycans are attached at residues N68 and N129. A disulfide bridge links C83 with C161.

Belongs to the calycin superfamily. Lipocalin family.

Its subcellular location is the secreted. This is Epididymal-specific lipocalin-9 from Homo sapiens (Human).